The following is a 249-amino-acid chain: uncharacterized protein (249 aa).

Positions 1–36 (MAKSPARRCTAKVRRVLSRSVLILCWSLLGAAPAHA) are cleaved as a signal peptide. The tract at residues 227–249 (ARQPPGRWVCPSSAGGPIGWHRQ) is disordered.

This is an uncharacterized protein from Mycobacterium tuberculosis (strain CDC 1551 / Oshkosh).